The primary structure comprises 495 residues: Cytochrome P450 Tp4149 (495 aa).

Helical transmembrane passes span 4–24 and 208–228; these read ILSL…MFFI and YLSM…SWVD. A glycan (N-linked (GlcNAc...) asparagine) is linked at N419. C437 provides a ligand contact to heme.

The protein belongs to the cytochrome P450 family. Requires heme as cofactor.

It localises to the membrane. Its pathway is secondary metabolite biosynthesis; terpenoid biosynthesis. Functionally, probably involved in the biosynthesis of germacrene-derived sesquiterpene lactones. This chain is Cytochrome P450 Tp4149, found in Tanacetum parthenium (Feverfew).